Reading from the N-terminus, the 132-residue chain is Small ribosomal subunit protein uS8 (132 aa).

It belongs to the universal ribosomal protein uS8 family. Part of the 30S ribosomal subunit. Contacts proteins S5 and S12.

Its function is as follows. One of the primary rRNA binding proteins, it binds directly to 16S rRNA central domain where it helps coordinate assembly of the platform of the 30S subunit. In Xanthobacter autotrophicus (strain ATCC BAA-1158 / Py2), this protein is Small ribosomal subunit protein uS8.